The primary structure comprises 148 residues: Calcium-regulated heat stable protein 1 (148 aa).

Positions 1–12 (MSSEPPPPPLQP) are enriched in pro residues. The interval 1–47 (MSSEPPPPPLQPPTHQTSVGLLDTPRTRDRSPSPLRGNVVPSPLPTR) is disordered. Position 2 is an N-acetylserine (Ser-2). Phosphoserine is present on residues Ser-31, Ser-33, and Ser-42. Phosphothreonine is present on Thr-46. Ser-53 and Ser-59 each carry phosphoserine. A CSD domain is found at 63-130 (VYKGVCKCFC…KLQAVEVVIT (68 aa)). The residue at position 147 (Ser-147) is a Phosphoserine.

As to quaternary structure, homodimer. Interacts with STYX. Post-translationally, can be phosphorylated by DYRK2 (in vitro). Dephosphorylated by calcineurin in a Ca(2+) dependent manner.

It is found in the cytoplasm. The protein localises to the P-body. The protein resides in the cytoplasmic granule. Its function is as follows. Binds mRNA and regulates the stability of target mRNA. The sequence is that of Calcium-regulated heat stable protein 1 (Carhsp1) from Mus musculus (Mouse).